The sequence spans 324 residues: MQDFLALTLQGEQPATREGKQANFSWRWLGEGLLECTPHAQYDKAVVLSAGVHGNETAPIELLSHLCTDLFAGRLKLAVRLLLVLGNPYAMRQGKRYVHDDVNRMFCGGYKNLPVTEESKRAEVLEQTVATFFQESSSQAKRYHYDLHTAIRASLLPTFALFPYQTHGYDADLTASLEAADLDALVYHNALGKTFTHFTSENFKAASATLELGKALPFGQNDLSQFASIDEVIRNVVSEQALPVRNKPKIRVFQVSDSLIKKDEEFHMNLSAEAPNFSTFTKGEIIATQPSGNYVVEQDQVWILFPNPNVKIGLRAGLVLTETI.

H53, E56, and H148 together coordinate Zn(2+). The active site involves E211.

The protein belongs to the AspA/AstE family. Succinylglutamate desuccinylase subfamily. It depends on Zn(2+) as a cofactor.

The catalysed reaction is N-succinyl-L-glutamate + H2O = L-glutamate + succinate. Its pathway is amino-acid degradation; L-arginine degradation via AST pathway; L-glutamate and succinate from L-arginine: step 5/5. Its function is as follows. Transforms N(2)-succinylglutamate into succinate and glutamate. The chain is Succinylglutamate desuccinylase from Acinetobacter baumannii (strain AB0057).